The following is a 2442-amino-acid chain: Piezo-type mechanosensitive ion channel component 1 (2442 aa).

At 1–5 (MTVPP) the chain is on the extracellular side. A helical membrane pass occupies residues 6 to 26 (LLKSCVVKLLLPAALLAAAII). Residue R27 is a topological domain, cytoplasmic. A helical transmembrane segment spans residues 28–48 (PSFLSIGYVLLALVSAVLPPI). The Extracellular segment spans residues 49 to 56 (RKSLALPK). The helical transmembrane segment at 57–77 (LVGTFVIITFLFCLAVALGVG) threads the bilayer. The Cytoplasmic segment spans residues 78-122 (SYQISEQVVHKNDRTYICNRSDTTLFRSIGLVRFHPTGTFESTRA). The helical transmembrane segment at 123 to 143 (FLPEIIATSAALLTIIIVMFL) threads the bilayer. Topologically, residues 144-173 (SHRDEQLDVVGDVVTVRSESGREQRRQRKL) are extracellular. Residues 174–196 (AAIMWSAIGNSLRRLTNFVLFLF) traverse the membrane as a helical segment. Residues 197 to 198 (TA) are Cytoplasmic-facing. The helical transmembrane segment at 199–219 (YVGIVKPSLSNSIYFLAFLFI) threads the bilayer. Over 220 to 239 (STWWSTYTPLRHGVYNQIKK) the chain is Extracellular. Residues 240 to 260 (FLIFYSALHFLVLYTYQIPIV) traverse the membrane as a helical segment. The Cytoplasmic segment spans residues 261-303 (HHSWLPTGSFLPRLFGLTVLMDSSCPEWWKFPFVAPDFNDDDL). Residues 304-324 (IMKWPLYANPIVVLVFFYLTV) form a helical membrane-spanning segment. The Extracellular segment spans residues 325 to 454 (AQYKFTRNGS…GDKESAASKG (130 aa)). N332, N392, and N440 each carry an N-linked (GlcNAc...) asparagine glycan. The tract at residues 389-417 (LLSNASSSANDDEQGRARSRSPLRNGEEQ) is disordered. Residues 455–475 (MIAVMTFVIFHSYSIALTAMM) form a helical membrane-spanning segment. Over 476–478 (TWA) the chain is Cytoplasmic. The helical transmembrane segment at 479 to 499 (LLYHSIFGLILLILTCILWIF) threads the bilayer. The Extracellular segment spans residues 500-506 (RDTRKSS). Residues 507 to 527 (FAMAPIILMYIEFLLILQYFL) form a helical membrane-spanning segment. Residues 528-552 (SMDIHAEIGDPAWMNFVGIEWTTLP) are Cytoplasmic-facing. The chain crosses the membrane as a helical span at residues 553–573 (VHAVIILCVQTLLTLPVFLLL). At 574 to 633 (RLARREKFYESLSDYERQRRINSYGTFGASKTGAGGVAVAKFQDPKSRKFAAFVEYLSNK) the chain is on the extracellular side. The chain crosses the membrane as a helical span at residues 634–654 (VSVYFIFVVSVVLLVVSTCFA). The Cytoplasmic portion of the chain corresponds to 655-656 (PN). The helical transmembrane segment at 657-677 (FYNILFFALWALNLIYLKFSF) threads the bilayer. At 678 to 683 (RLYRGL) the chain is on the extracellular side. A helical membrane pass occupies residues 684-704 (AYAFWLTLTFYTSIVIIALYI). The Cytoplasmic segment spans residues 705–739 (YQFPGVSQWIIRNTSLSQEWLNAIGLVDFRAIGES). The helical transmembrane segment at 740–760 (GALFLQLLAPIALFVVTMLQL) threads the bilayer. Over 761 to 832 (KFFHGPWSRA…WRFFEVHISK (72 aa)) the chain is Extracellular. The disordered stretch occupies residues 768 to 798 (SRATSPRRAENDPPTSTTEAAAVASTSGTQG). Residues 782 to 794 (TSTTEAAAVASTS) show a composition bias toward low complexity. N816 is a glycosylation site (N-linked (GlcNAc...) asparagine). Residues 833 to 853 (IVFVIIAIFIANNINALYIPL) form a helical membrane-spanning segment. Residues 854 to 874 (VILLSLAICLPSAADGIFSLF) lie on the Cytoplasmic side of the membrane. The chain crosses the membrane as a helical span at residues 875 to 895 (MCAYLFLVALSKMIYQLDIVP). Over 896 to 931 (ELSQIDRGVGADNCSHGNISMPEWFGLKKEVEGTEP) the chain is Extracellular. 2 N-linked (GlcNAc...) asparagine glycosylation sites follow: N908 and N913. The helical transmembrane segment at 932–952 (IYMLFGVIVSIIALAFQSIVI) threads the bilayer. Residues 953–990 (YRQRHYRASLGLPESMRAKVFPDFHHSHFDRSLKNAIQ) are Cytoplasmic-facing. A helical membrane pass occupies residues 991–1011 (FLIDYGFYKFGLEITMIAIGI). Position 1012 (D1012) is a topological domain, extracellular. The helical transmembrane segment at 1013–1033 (IFNRMDALAAIQCFWLVLFAL) threads the bilayer. Over 1034 to 1041 (NKRVFVRR) the chain is Cytoplasmic. The chain crosses the membrane as a helical span at residues 1042–1062 (IWVFYVIYMAILYPLQFFSYV). At 1063–1096 (GLPPDSCIEYPWSYWIPSYSDDARFNLSYLLNLS) the chain is on the extracellular side. N-linked (GlcNAc...) asparagine glycosylation is found at N1088 and N1094. A helical transmembrane segment spans residues 1097–1117 (IYGVNWPSAYLIGDFFVLLLA). The Cytoplasmic segment spans residues 1118–1160 (SCQLAVFRREGEDNDSIYNDGNFVIKPENPQYDFIDTKKSYVD). The chain crosses the membrane as a helical span at residues 1161-1181 (YFKSFVFHYGHWITLMSTLAA). Over 1182-1187 (GIAGTS) the chain is Extracellular. Residues 1188 to 1210 (LFALGYIIFTLTMLWSGNNLYVM) form a helical membrane-spanning segment. The Cytoplasmic segment spans residues 1211-1231 (NSTLRSFEHTLKRWNALLGYT). Residues 1232-1252 (LFTITMKVCLQIFGCVFLSWF) traverse the membrane as a helical segment. The Extracellular segment spans residues 1253 to 1299 (DQSGGWGKTLCIVRQLFSITCVNNECHVLKELEDFSKACAVETKEGN). Residues 1300-1320 (IGFDVIALSFLVFQIRIFHSW) form a helical membrane-spanning segment. The Cytoplasmic segment spans residues 1321-1615 (YFQHCMVEYR…VVNCIGAHTD (295 aa)). Residues 1463–1502 (DTIKDPDSRALIAVSEPEARKPGGTEETDGDEDEDNKDSK) are disordered. The segment covering 1488–1498 (EETDGDEDEDN) has biased composition (acidic residues). A helical membrane pass occupies residues 1616-1636 (ILCYFFAIMTQVMTGGLITLP). Residues 1637-1654 (LPLMSLFWGNLSNPRPSK) lie on the Extracellular side of the membrane. N-linked (GlcNAc...) asparagine glycosylation occurs at N1646. Residues 1655–1675 (FFWVTMITYTECVIVIKFVCQ) traverse the membrane as a helical segment. Topologically, residues 1676–1706 (FAFMPYNSITWRTEHQMDPMSLDKLFGVSQR) are cytoplasmic. A helical transmembrane segment spans residues 1707–1727 (DSFALWDIVLLFSLFFHRYML). Topologically, residues 1728 to 1833 (RKLGLWKDAN…KFRYIRDLYP (106 aa)) are extracellular. A glycan (N-linked (GlcNAc...) asparagine) is linked at N1737. The chain crosses the membrane as a helical span at residues 1834 to 1854 (IMFGIDVICFLIMTFGYSAFG). Residues 1855–1866 (EGGSGNVLDDVK) are Cytoplasmic-facing. A helical membrane pass occupies residues 1867 to 1887 (ASRIPVTLVVMLVGMTLAIII). Residues 1888-1900 (DRALYLRKSVVGK) are Extracellular-facing. The helical transmembrane segment at 1901-1921 (LIYQVLMIAFLHIWVFLVLPN) threads the bilayer. Residues 1922-1930 (MTRRSAISN) lie on the Cytoplasmic side of the membrane. The chain crosses the membrane as a helical span at residues 1931–1951 (HVAQALYVIKSCYFLVSAWQI). The Extracellular segment spans residues 1952 to 2046 (RNGYPELCIG…KGKLVKYMMG (95 aa)). Residues 2047–2067 (FPIIIGVVIFIFSPLLLWSLL) traverse the membrane as a helical segment. Residues 2068–2346 (NQIGTISMPE…VGFIDRAFPS (279 aa)) lie on the Cytoplasmic side of the membrane. The chain crosses the membrane as a helical span at residues 2347–2367 (FLAKVFKGGVIAVYLSVILVV). Topologically, residues 2368–2442 (GRGLVRGIFT…WTRMSKKKQE (75 aa)) are extracellular.

It belongs to the PIEZO (TC 1.A.75) family. In terms of tissue distribution, expressed in the pharyngeal-intestinal and spermathecal-uterine valves and in multiple reproductive tissues including the germline, somatic oviduct, and spermatheca. During reproduction, it is expressed in sheath cells, sperm, both spermathecal valves and the spermathecal bag cells.

It localises to the cell membrane. Its function is as follows. Pore-forming subunit of a mechanosensitive non-specific cation channel. Generates currents characterized by a linear current-voltage relationship. Plays a role in reproduction by positively regulating inter-tissue signaling to promote oocyte maturation, ovulation and fertilization, and sperm navigation from and to the spermatheca. May play a role in regulating cytosolic and endoplasmic reticulum calcium ion release. This chain is Piezo-type mechanosensitive ion channel component 1, found in Caenorhabditis elegans.